The chain runs to 85 residues: UPF0386 protein VF_0869 (85 aa).

This sequence belongs to the UPF0386 family.

The polypeptide is UPF0386 protein VF_0869 (Aliivibrio fischeri (strain ATCC 700601 / ES114) (Vibrio fischeri)).